Here is a 144-residue protein sequence, read N- to C-terminus: Aspartate carbamoyltransferase regulatory chain (144 aa).

C103, C108, C132, and C135 together coordinate Zn(2+).

This sequence belongs to the PyrI family. Contains catalytic and regulatory chains. Zn(2+) is required as a cofactor.

Involved in allosteric regulation of aspartate carbamoyltransferase. The polypeptide is Aspartate carbamoyltransferase regulatory chain (Clostridium tetani (strain Massachusetts / E88)).